Reading from the N-terminus, the 417-residue chain is MENTSVNKEPSIIVGGFVLGGAMIGAGMFSLPTIMSGAWFINSLFILFIVCFFMFHSGIYILECISKYGAGTNYFDISKELLPKWACYIANASLIFVLYILIYAYISAAGSIIYEASLLYGINFNLRAIFFIFTIALGATIWWGGACASRLTSIFLFIKIVLFILAFSGLFFKAKGDLLFSATFAGKSQLYLYPFIFIIIPYAITSFGYHGNVCSLYKLYNQNERKVVKSCIIGCLLALVIYLLWMIGTMGNLPREQFITIIQKGGNLDAFIDSLYTVLNSKYIEGFLLWFSISAVFCSFLGVAIGLFDYILASLKFKDNKTGRLKSGVLCFTPPLLLCLFFPNGFLIAIAYAGTAACVWAIICPAVMALKARQKFPNSGFKVWGGKKLIYAVIAFGVVGIICQSWRNLIYCLFIVK.

The next 11 helical transmembrane spans lie at 12 to 32 (IIVG…FSLP), 34 to 54 (IMSG…CFFM), 94 to 114 (LIFV…SIIY), 128 to 148 (AIFF…GACA), 152 to 172 (TSIF…GLFF), 190 to 210 (LYLY…FGYH), 231 to 251 (CIIG…GTMG), 288 to 308 (LLWF…IGLF), 325 to 345 (LKSG…FPNG), 346 to 366 (FLIA…ICPA), and 383 to 403 (VWGG…GIIC).

Belongs to the amino acid/polyamine transporter 2 family. Mtr/TnaB/TyrP permease subfamily.

It localises to the cell inner membrane. In terms of biological role, involved in tryptophan transport across the cytoplasmic membrane. Plays a role in transporting tryptophan which is to be used catabolically. The chain is Low affinity tryptophan permease (tnaB) from Proteus vulgaris.